A 350-amino-acid polypeptide reads, in one-letter code: RNA 3'-terminal phosphate cyclase (350 aa).

ATP-binding positions include glutamine 107 and 290–294 (FLGDQ). The Tele-AMP-histidine intermediate role is filled by histidine 316.

Belongs to the RNA 3'-terminal cyclase family. Type 1 subfamily.

The protein localises to the cytoplasm. It carries out the reaction a 3'-end 3'-phospho-ribonucleotide-RNA + ATP = a 3'-end 2',3'-cyclophospho-ribonucleotide-RNA + AMP + diphosphate. Its function is as follows. Catalyzes the conversion of 3'-phosphate to a 2',3'-cyclic phosphodiester at the end of RNA. The mechanism of action of the enzyme occurs in 3 steps: (A) adenylation of the enzyme by ATP; (B) transfer of adenylate to an RNA-N3'P to produce RNA-N3'PP5'A; (C) and attack of the adjacent 2'-hydroxyl on the 3'-phosphorus in the diester linkage to produce the cyclic end product. The biological role of this enzyme is unknown but it is likely to function in some aspects of cellular RNA processing. The protein is RNA 3'-terminal phosphate cyclase of Gloeothece citriformis (strain PCC 7424) (Cyanothece sp. (strain PCC 7424)).